The sequence spans 397 residues: Lysosomal acid lipase/cholesteryl ester hydrolase (397 aa).

A signal peptide spans 1 to 25 (MQLLGRVICFVVGILLSGGPTGTIS). Positions 26 to 72 (AVDPEANMNVTEIIMHWGYPEHSVQTGDGYILGVHRIPHGRKNQFDK) are cleaved as a propeptide — removed in mature form. 3 N-linked (GlcNAc...) asparagine glycosylation sites follow: Asn-34, Asn-99, and Asn-159. An AB hydrolase-1 domain is found at 84 to 378 (HGFLADSSNW…EWDHLDFIWG (295 aa)). Ser-172 serves as the catalytic Charge relay system. Residues Asn-271 and Asn-319 are each glycosylated (N-linked (GlcNAc...) asparagine). His-372 functions as the Charge relay system in the catalytic mechanism.

It belongs to the AB hydrolase superfamily. Lipase family. In terms of assembly, monomer. Post-translationally, glycosylation is not essential for catalytic activity.

The protein resides in the lysosome. It catalyses the reaction a sterol ester + H2O = a sterol + a fatty acid + H(+). The catalysed reaction is cholesteryl (9Z-octadecenoate) + H2O = cholesterol + (9Z)-octadecenoate + H(+). The enzyme catalyses a triacylglycerol + H2O = a 1,2-diacylglycerol + a fatty acid + H(+). It carries out the reaction 1,2-di-(9Z-octadecenoyl)-glycerol + (9Z)-octadecenoate + H(+) = 1,2,3-tri-(9Z-octadecenoyl)-glycerol + H2O. It catalyses the reaction a 1,2-diacylglycerol + H2O = a 1-acylglycerol + a fatty acid + H(+). The catalysed reaction is 1,2-di-(9Z-octadecenoyl)-glycerol + H2O = 1-(9Z-octadecenoyl)-glycerol + (9Z)-octadecenoate + H(+). The enzyme catalyses a 1,3-diacylglycerol + H2O = a 1-acylglycerol + a fatty acid + H(+). It carries out the reaction 1,3-di-(9Z-octadecenoyl)-glycerol + H2O = 1-(9Z-octadecenoyl)-glycerol + (9Z)-octadecenoate + H(+). Functionally, catalyzes the deacylation of cholesteryl ester core lipids of endocytosed low density lipoproteins to generate free fatty acids and cholesterol. Hydrolyzes triglycerides (1,2,3-triacylglycerol) and diglycerides (such as 1,2-diacylglycerol and 1,3-diacylglycerol) with preference for the acyl moieties at the sn-1 or sn-3 positions. The sequence is that of Lysosomal acid lipase/cholesteryl ester hydrolase (Lipa) from Rattus norvegicus (Rat).